Consider the following 53-residue polypeptide: Zinc metalloproteinase-disintegrin-like alborhagin (53 aa).

The protein belongs to the venom metalloproteinase (M12B) family. P-III subfamily. P-IIIb sub-subfamily. As to quaternary structure, monomer. Zn(2+) is required as a cofactor. In terms of processing, contains numerous disulfide bonds. Glycosylated. As to expression, expressed by the venom gland.

It is found in the secreted. Alborhagin-induced platelet aggregation, but not shape change, is inhibited by EDTA, suggesting that the platelet activation (shape change) is independent of divalent cation or metalloproteinase activity. Its function is as follows. Induces platelet activation and glycoprotein VI (GP6)-dependent platelet aggregation. Induces ectodomain cleavage of GP6 by activating endogenous platelet metalloproteinases (probably ADAM10). Has fibrinogenolytic activity against the alpha chain of fibrinogen (FGA). Recognizes distinct binding sites as convulxin, since alborhagin has minimal effect on convulxin binding to GPVI-expressing cells. Disintegrin alborhagin-C: 42 kDa fragment of alborhagin autoproteolysed that does not show platelet activation. The protein is Zinc metalloproteinase-disintegrin-like alborhagin of Trimeresurus albolabris (White-lipped pit viper).